Consider the following 103-residue polypeptide: Small ribosomal subunit protein uS10 (103 aa).

The protein belongs to the universal ribosomal protein uS10 family. In terms of assembly, part of the 30S ribosomal subunit.

In terms of biological role, involved in the binding of tRNA to the ribosomes. The chain is Small ribosomal subunit protein uS10 from Campylobacter jejuni subsp. jejuni serotype O:6 (strain 81116 / NCTC 11828).